The primary structure comprises 549 residues: Chaperonin GroEL (549 aa).

ATP is bound by residues 29–32 (TLGP), Lys50, 86–90 (DGTTT), Gly414, 478–480 (NAA), and Asp494.

This sequence belongs to the chaperonin (HSP60) family. As to quaternary structure, forms a cylinder of 14 subunits composed of two heptameric rings stacked back-to-back. Interacts with the co-chaperonin GroES.

Its subcellular location is the cytoplasm. The enzyme catalyses ATP + H2O + a folded polypeptide = ADP + phosphate + an unfolded polypeptide.. Functionally, together with its co-chaperonin GroES, plays an essential role in assisting protein folding. The GroEL-GroES system forms a nano-cage that allows encapsulation of the non-native substrate proteins and provides a physical environment optimized to promote and accelerate protein folding. The chain is Chaperonin GroEL from Psychrobacter cryohalolentis (strain ATCC BAA-1226 / DSM 17306 / VKM B-2378 / K5).